Consider the following 236-residue polypeptide: Cyclin-P3-1 (236 aa).

This sequence belongs to the cyclin family. Cyclin U/P subfamily.

The protein is Cyclin-P3-1 (CYCP3-1) of Oryza sativa subsp. japonica (Rice).